We begin with the raw amino-acid sequence, 201 residues long: Bradykinin potentiating and C-type natriuretic peptides (201 aa).

Positions 1-23 (MFVSRLAASGLLLLALLAVSLDG) are cleaved as a signal peptide. Residues 24 to 47 (KPVQQWSQNWPGPKVPPLVVQQWS) constitute a propeptide that is removed on maturation. Residue Q48 is modified to Pyrrolidone carboxylic acid. A propeptide spanning residues 58–60 (LVV) is cleaved from the precursor. Q61 carries the pyrrolidone carboxylic acid modification. 2 consecutive propeptides follow at residues 67–95 (TQLQ…AALD) and 107–179 (GSKA…LAKK). The interval 90-172 (PDAALDTPPA…GGGGGGGARR (83 aa)) is disordered. The span at 120–130 (SKGASATSTAS) shows a compositional bias: low complexity. A compositionally biased stretch (basic and acidic residues) spans 132–142 (PMRDLRTDGKQ). A compositionally biased stretch (gly residues) spans 159 to 170 (PGGGGGGGGGGA). C185 and C201 are joined by a disulfide.

The protein in the N-terminal section; belongs to the bradykinin-potentiating peptide family. In the central section; belongs to the bradykinin inhibitor peptide family. It in the C-terminal section; belongs to the natriuretic peptide family. Venom gland.

It is found in the secreted. Its function is as follows. Inhibits the activity of the angiotensin-converting enzyme (ACE) by a preferential interaction with its C-domain. May also potentiate the hypotensive effects of bradykinin. In terms of biological role, antagonizes the vasodilatory actions of bradykinin at the B2 bradykinin receptor. Has a vasorelaxant activity in rat aortic strips and a diuretic potency in anesthetized rats. May act by activating natriuretic receptors (NPR1 and/or NPR2). This Sistrurus catenatus edwardsii (Desert massasauga) protein is Bradykinin potentiating and C-type natriuretic peptides.